Reading from the N-terminus, the 254-residue chain is MSFTVIIPARFASSRLPGKPLADIKGKPMIQHVFEKALQSGASRVIIATDNENVADVAKSFGAEVCMTSVNHNSGTERLAEVVEKLAIPDNEIIVNIQGDEPLIPPVIVRQVADNLAKFNVNMASLAVKIHDAEELFNPNAVKVLTDKDGYVLYFSRSVIPYDRDQFMNLQDVQKVQLSDAYLRHIGIYAYRAGFIKQYVQWAPTQLENLEKLEQLRVLYNGERIHVELAKEVPAVGVDTAEDLEKVRAILAAN.

Belongs to the KdsB family.

Its subcellular location is the cytoplasm. The catalysed reaction is 3-deoxy-alpha-D-manno-oct-2-ulosonate + CTP = CMP-3-deoxy-beta-D-manno-octulosonate + diphosphate. The protein operates within nucleotide-sugar biosynthesis; CMP-3-deoxy-D-manno-octulosonate biosynthesis; CMP-3-deoxy-D-manno-octulosonate from 3-deoxy-D-manno-octulosonate and CTP: step 1/1. Its pathway is bacterial outer membrane biogenesis; lipopolysaccharide biosynthesis. Its function is as follows. Activates KDO (a required 8-carbon sugar) for incorporation into bacterial lipopolysaccharide in Gram-negative bacteria. The protein is 3-deoxy-manno-octulosonate cytidylyltransferase of Haemophilus influenzae (strain ATCC 51907 / DSM 11121 / KW20 / Rd).